An 815-amino-acid polypeptide reads, in one-letter code: MRVLKFGGTSLANPERFSQAAKLIEQAHLEEQAAGVLSAPAKITNHLVALSEKAALNQSTDTHFNEAIEIFYNIINGLHTENNQFDLNGTKALIDAEFVQIKGLLEEIRQAGKVEDAVKATIDCRGEKLSIAMMKAWFEARGYSVHIVDPVKQLLAKGGYLESSVEIEESTKRVDAANIAKDKVVLMAGFTAGNEKGELVLLGRNGSDYSAACLAACLGASVCEIWTDVDGVYTCDPRLVPDARLLPTLSYREAMELSYFGAKVIHPRTIGPLLPQNIPCVIKNTGNPSAPGSIIDGNVKSESLQVKGITNLDNLAMFNVSGPGMQGMVGMASRVFSAMSGAGISVILITQSSSEYSISFCVPVKSAEVAKTVLETEFANELNEHQLEPIEVIKDLSIISVVGDGMKQAKGIAARFFSALAQANISIVAIAQGSSERSISAVVPQNKAIEAVKATHQALFNNKKVVDMFLVGVGGVGGELIEQVKRQKEYLAKKNVEIRVCAIANSNRMLLDENGLNLEDWKNDLENATQPSDFDVLLSFIKLHHVVNPVFVDCTSAESVAGLYARALKEGFHVVTPNKKANTRELVYYNELRQNAQASQHKFLYETNVGAGLPVIENLQNLLAAGDELEYFEGILSGSLSFIFGKLEEGLSLSEVTALAREKGFTEPDPRDDLSGQDVARKLLILAREAGIELELSDVEVEGVLPKGFSDGKSADEFMAMLPQLDEEFKTRVATAKAEGKVLRYVGKISEGKCKVSIVAVDLNNPLYKVKDGENALAFYTRYYQPIPLLLRGYGAGNAVTAAGIFADILRTLQH.

An aspartokinase region spans residues M1–L249. The tract at residues S250 to L470 is interface. 2 ACT domains span residues V320 to V392 and V401 to G478. The homoserine dehydrogenase stretch occupies residues V471–H815. Residues V473, G475, V476, A504, and T555 each contribute to the NAD(+) site. V476 is a binding site for NADP(+). An NADPH-binding site is contributed by V476. T555 provides a ligand contact to NADP(+). Residues T555, S556, and K579 each contribute to the NADPH site. Residue K579 coordinates NADP(+). Na(+) is bound by residues E606, V609, A611, and L613. G664 and E667 together coordinate NADP(+). L-homoserine is bound by residues E667 and D678. K682 serves as the catalytic Proton donor. G797 provides a ligand contact to NAD(+). G797 lines the NADP(+) pocket. G797 lines the NADPH pocket.

The protein in the N-terminal section; belongs to the aspartokinase family. It in the C-terminal section; belongs to the homoserine dehydrogenase family. Homotetramer. It depends on a metal cation as a cofactor.

It catalyses the reaction L-homoserine + NADP(+) = L-aspartate 4-semialdehyde + NADPH + H(+). The enzyme catalyses L-homoserine + NAD(+) = L-aspartate 4-semialdehyde + NADH + H(+). The catalysed reaction is L-aspartate + ATP = 4-phospho-L-aspartate + ADP. The protein operates within amino-acid biosynthesis; L-lysine biosynthesis via DAP pathway; (S)-tetrahydrodipicolinate from L-aspartate: step 1/4. Its pathway is amino-acid biosynthesis; L-methionine biosynthesis via de novo pathway; L-homoserine from L-aspartate: step 1/3. It functions in the pathway amino-acid biosynthesis; L-methionine biosynthesis via de novo pathway; L-homoserine from L-aspartate: step 3/3. It participates in amino-acid biosynthesis; L-threonine biosynthesis; L-threonine from L-aspartate: step 1/5. The protein operates within amino-acid biosynthesis; L-threonine biosynthesis; L-threonine from L-aspartate: step 3/5. Bifunctional aspartate kinase and homoserine dehydrogenase that catalyzes the first and the third steps toward the synthesis of lysine, methionine and threonine from aspartate. This is Bifunctional aspartokinase/homoserine dehydrogenase (thrA) from Haemophilus influenzae (strain ATCC 51907 / DSM 11121 / KW20 / Rd).